The sequence spans 256 residues: Small ribosomal subunit protein uS2 (256 aa).

The protein belongs to the universal ribosomal protein uS2 family.

The polypeptide is Small ribosomal subunit protein uS2 (Streptococcus agalactiae serotype Ia (strain ATCC 27591 / A909 / CDC SS700)).